The chain runs to 259 residues: Phosphate import ATP-binding protein PstB (259 aa).

The 249-residue stretch at 6 to 254 folds into the ABC transporter domain; the sequence is SKNESVVFDV…PKDKRTEDYI (249 aa). Residue 45–52 participates in ATP binding; it reads GPSGCGKS.

The protein belongs to the ABC transporter superfamily. Phosphate importer (TC 3.A.1.7) family. The complex is composed of two ATP-binding proteins (PstB), two transmembrane proteins (PstC and PstA) and a solute-binding protein (PstS).

Its subcellular location is the cell membrane. It carries out the reaction phosphate(out) + ATP + H2O = ADP + 2 phosphate(in) + H(+). In terms of biological role, part of the ABC transporter complex PstSACB involved in phosphate import. Responsible for energy coupling to the transport system. This is Phosphate import ATP-binding protein PstB from Desulfitobacterium hafniense (strain Y51).